Reading from the N-terminus, the 632-residue chain is Biosynthetic arginine decarboxylase (632 aa).

K101 carries the N6-(pyridoxal phosphate)lysine modification. 281-291 (FDVGGGLGVDY) contributes to the substrate binding site.

This sequence belongs to the Orn/Lys/Arg decarboxylase class-II family. SpeA subfamily. The cofactor is Mg(2+). Requires pyridoxal 5'-phosphate as cofactor.

It carries out the reaction L-arginine + H(+) = agmatine + CO2. Its pathway is amine and polyamine biosynthesis; agmatine biosynthesis; agmatine from L-arginine: step 1/1. In terms of biological role, catalyzes the biosynthesis of agmatine from arginine. This Klebsiella pneumoniae (strain 342) protein is Biosynthetic arginine decarboxylase.